We begin with the raw amino-acid sequence, 723 residues long: MRSLVLLGMSSLATANSLWSSKAASWDTTNEAYTLGNGKLGVMPFGEPGAEKLNLNHDELWEGGPFEVNGYRGGNPNSSMTEILSEVRDEIWKKGTGNDSRLHGDTDGYGSFHSLANLTIAIDGIDKVSDYTRSLDLGTGIHTTTYSTGKGKYTTDVYCSYPAQVCIYKLNSTATLSKVTIYFDQLVEESSLWNATCDSDFARLRGVTQEGPPRGMTYDTIARSSIPGRCDSSTGKLAINARNSSSLTIVIGAGTDFDGTKGTAATDYTFKGEDPAEYVEKITSSALSQSESKLRTEHIEDYSGLMSAFTLDLPDTQDSTGTELSTLITNYNANKTDGDPYLEKLLFDYGRHLFISSSRANSLPPNLQGVWSPTKNAAWSGDYHANINLQMNLWGAEATGLGELTVAVFNYMEQNWMPRGAETAELLYGGAGWVTHDEMNIFGHTGSLVVNPCTSPEQGPTTFGCTHWQQLIHQVYENAIQGAEIAGETDSTLLKDIKDQLPRLDKGLHIGTWGQIKEWKLPDSYDYEKEGNEHRHLSHLVGWYPGWSLSSYFNGYNNATIQSAVNTSLISRGVGLYTNAGWEKVWRSACWARLNNTEKAHYELRLTIDQNIGQSGLSLYSGGDTPSGAFQIDANFGYLGAVLSMLVVDMPLDSTHSEDDVRTVVLGPAIPAAWAGGSVKGLRLRGGGSVDFSWDSEGLVDKASATGVSSNVRIVNVEGTVLV.

A signal peptide spans 1–15 (MRSLVLLGMSSLATA). N-linked (GlcNAc...) asparagine glycosylation is found at Asn77, Asn98, Asn117, Asn171, Asn194, Asn243, Asn334, Asn558, Asn566, and Asn595.

The protein belongs to the glycosyl hydrolase 95 family.

The protein localises to the secreted. It carries out the reaction an alpha-L-fucoside + H2O = L-fucose + an alcohol. Alpha-fucosidase involved in degradation of fucosylated xyloglucans. Hydrolyzes alpha-1,2-linked fucose. The polypeptide is Probable alpha-fucosidase A (afcA) (Aspergillus oryzae (strain ATCC 42149 / RIB 40) (Yellow koji mold)).